The primary structure comprises 245 residues: 1-(5-phosphoribosyl)-5-[(5-phosphoribosylamino)methylideneamino] imidazole-4-carboxamide isomerase (245 aa).

Asp7 (proton acceptor) is an active-site residue. Asp129 functions as the Proton donor in the catalytic mechanism.

It belongs to the HisA/HisF family.

The protein localises to the cytoplasm. The enzyme catalyses 1-(5-phospho-beta-D-ribosyl)-5-[(5-phospho-beta-D-ribosylamino)methylideneamino]imidazole-4-carboxamide = 5-[(5-phospho-1-deoxy-D-ribulos-1-ylimino)methylamino]-1-(5-phospho-beta-D-ribosyl)imidazole-4-carboxamide. It functions in the pathway amino-acid biosynthesis; L-histidine biosynthesis; L-histidine from 5-phospho-alpha-D-ribose 1-diphosphate: step 4/9. This is 1-(5-phosphoribosyl)-5-[(5-phosphoribosylamino)methylideneamino] imidazole-4-carboxamide isomerase from Serratia proteamaculans (strain 568).